Reading from the N-terminus, the 311-residue chain is MECKRARAYSSSANLGSGFDILSMAHTAFFDTVEICVETKNSENIVIESNSKIPLEPNRNSATYPLVRIMEERGIKASLRVKVIKGIPEGLGLGSSGASATAAVMAFSSLFNLNLSKEDLVRYAMYGEIASSGSPHPDNVAASVFGGVVSVVSVNPVKVVEIPLNYSFNILLFVPLNVHIEEKTKKAREMVPKTVKLSDYINNSRYISSLLIGFVKGERDLIRLGLNDEIVEKARLPLFPYYPKIKEIAIKYDAVGSCVSGAGPSILVLTDKMTDENKIAEEGTKTCNEFNVECEVIKAKIAGGVEVERRN.

An ATP-binding site is contributed by 88–98 (PEGLGLGSSGA).

Belongs to the GHMP kinase family. Homoserine kinase subfamily.

It localises to the cytoplasm. The catalysed reaction is L-homoserine + ATP = O-phospho-L-homoserine + ADP + H(+). It functions in the pathway amino-acid biosynthesis; L-threonine biosynthesis; L-threonine from L-aspartate: step 4/5. Its function is as follows. Catalyzes the ATP-dependent phosphorylation of L-homoserine to L-homoserine phosphate. This Saccharolobus islandicus (strain L.S.2.15 / Lassen #1) (Sulfolobus islandicus) protein is Homoserine kinase.